A 187-amino-acid polypeptide reads, in one-letter code: Basic helix-loop-helix transcription factor scleraxis (187 aa).

Disordered regions lie at residues 21–83 (LSED…TNSV) and 140–163 (AFFH…QPKQ). Residues 34 to 43 (SDEKPFHLDA) show a composition bias toward basic and acidic residues. Residues 50-72 (AGKRRSGKKAGRLHREPRQRHTA) show a composition bias toward basic residues. Residues 67–119 (RQRHTANARERDRTNSVNTAFTALRTLIPTEPADRKLSKIETLRLASSYISHL) form the bHLH domain.

In terms of assembly, efficient DNA binding requires dimerization with another bHLH protein. Dimerizes and binds the E-box consensus sequence with E12. In terms of tissue distribution, expressed in the intersomitic, the superficial proximomedial limb mesenchyme and the subectodermal mesenchyme.

The protein localises to the nucleus. In terms of biological role, plays an early essential role in mesoderm formation, as well as a later role in formation of somite-derived chondrogenic lineages. This is Basic helix-loop-helix transcription factor scleraxis (SCX) from Gallus gallus (Chicken).